We begin with the raw amino-acid sequence, 240 residues long: Putative exosome complex component RRP41 (240 aa).

This sequence belongs to the RNase PH family. Component of the RNA exosome complex.

The protein localises to the cytoplasm. It is found in the nucleus. The protein resides in the nucleolus. Its subcellular location is the nucleoplasm. Its function is as follows. Non-catalytic component of the RNA exosome complex which has 3'-&gt;5' exoribonuclease activity and participates in a multitude of cellular RNA processing and degradation events. The polypeptide is Putative exosome complex component RRP41 (exos-4.1) (Caenorhabditis briggsae).